Consider the following 296-residue polypeptide: Probable porphobilinogen deaminase (296 aa).

Cys241 is subject to S-(dipyrrolylmethanemethyl)cysteine.

It belongs to the HMBS family. Requires dipyrromethane as cofactor.

The enzyme catalyses 4 porphobilinogen + H2O = hydroxymethylbilane + 4 NH4(+). The protein operates within porphyrin-containing compound metabolism; protoporphyrin-IX biosynthesis; coproporphyrinogen-III from 5-aminolevulinate: step 2/4. Functionally, tetrapolymerization of the monopyrrole PBG into the hydroxymethylbilane pre-uroporphyrinogen in several discrete steps. The sequence is that of Probable porphobilinogen deaminase from Pyrobaculum neutrophilum (strain DSM 2338 / JCM 9278 / NBRC 100436 / V24Sta) (Thermoproteus neutrophilus).